A 305-amino-acid polypeptide reads, in one-letter code: Protoheme IX farnesyltransferase 1 (305 aa).

The next 8 membrane-spanning stretches (helical) occupy residues 22–42 (IKTGIIKSNLVPMFAGLTLAL), 53–73 (IPEILFAFIGSILIIGAAGAF), 94–114 (VTGDISPKTALWLGIFMTIFG), 115–135 (LVFLALTTYLAAILGFIGLFL), 154–174 (IGSVSGAMPPLIGWAAIYPDV), 179–199 (IIGLFIIMIIWQMPHFYAIAI), 230–250 (LVILIIISILLGSLSIGLMLV), and 283–303 (LFHMTILFSTVIIYSLVGIFF).

The protein belongs to the UbiA prenyltransferase family. Protoheme IX farnesyltransferase subfamily. Interacts with CtaA.

Its subcellular location is the cell membrane. It catalyses the reaction heme b + (2E,6E)-farnesyl diphosphate + H2O = Fe(II)-heme o + diphosphate. It participates in porphyrin-containing compound metabolism; heme O biosynthesis; heme O from protoheme: step 1/1. In terms of biological role, converts heme B (protoheme IX) to heme O by substitution of the vinyl group on carbon 2 of heme B porphyrin ring with a hydroxyethyl farnesyl side group. The sequence is that of Protoheme IX farnesyltransferase 1 from Bacillus cytotoxicus (strain DSM 22905 / CIP 110041 / 391-98 / NVH 391-98).